A 447-amino-acid polypeptide reads, in one-letter code: NADH-ubiquinone oxidoreductase chain 4 (447 aa).

The next 13 helical transmembrane spans lie at 28 to 48 (IFLLTFMFMINLSSLNYFNYI), 56 to 76 (MVSYGLILLSFWICGLMLMAS), 89 to 109 (FVFMILFLLFMLVLTFSSMSV), 110 to 130 (FMFYLFFEASLIPTLFLILGW), 141 to 161 (VYLLFYTLLASLPLLIGIFYI), 183 to 203 (LLYLSLVFAFLVKMPMFLVHL), 213 to 233 (PVSGSMILAGILLKLGGYGLL), 246 to 266 (YNYWWISISLVGGVLISLVCL), 273 to 293 (ALIAYSSVAHMGIVLSGLLTM), 298 to 318 (LTGSYALMIAHGLCSSGLFCL), 331 to 351 (LLINKGLLNFMPTLSLWWFLL), 374 to 394 (IVSWSWITMIMLSFLSFFSAA), and 409 to 431 (YSGVYFFSVGTTREFLLLMLHWL).

It belongs to the complex I subunit 4 family.

The protein localises to the mitochondrion membrane. The enzyme catalyses a ubiquinone + NADH + 5 H(+)(in) = a ubiquinol + NAD(+) + 4 H(+)(out). In terms of biological role, core subunit of the mitochondrial membrane respiratory chain NADH dehydrogenase (Complex I) that is believed to belong to the minimal assembly required for catalysis. Complex I functions in the transfer of electrons from NADH to the respiratory chain. The immediate electron acceptor for the enzyme is believed to be ubiquinone. The sequence is that of NADH-ubiquinone oxidoreductase chain 4 (mt:ND4) from Anopheles gambiae (African malaria mosquito).